Here is a 145-residue protein sequence, read N- to C-terminus: MRTTYMAKPLEVERKWYIVDAEGQTLGRLASEVASILRGKLKPEFTPHVDAGDFVIVINADKVKLTGNKLNDKIYYTHSLYPGGLKKTTAGAMLNKRPDRMFELAVKGMLPKNSLGRQMFTKLKVYAGTEHPHAAQKPEVWQIRG.

It belongs to the universal ribosomal protein uL13 family. As to quaternary structure, part of the 50S ribosomal subunit.

Functionally, this protein is one of the early assembly proteins of the 50S ribosomal subunit, although it is not seen to bind rRNA by itself. It is important during the early stages of 50S assembly. The protein is Large ribosomal subunit protein uL13 of Brevibacillus brevis (strain 47 / JCM 6285 / NBRC 100599).